A 334-amino-acid polypeptide reads, in one-letter code: Putative violet-sensitive opsin (334 aa).

Residues 1–29 lie on the Extracellular side of the membrane; it reads MGKYFYLYENISKVGPYDGPQYYLAPTWA. The N-linked (GlcNAc...) asparagine glycan is linked to N10. Residues 30–54 traverse the membrane as a helical segment; it reads FYLQAAFMGFVFFVGTPLNFVVLLA. Over 55-66 the chain is Cytoplasmic; the sequence is TAKYKKLRVPLN. A helical membrane pass occupies residues 67–88; the sequence is YILVNITFAGFIFVTFSVSQVF. Topologically, residues 89 to 106 are extracellular; that stretch reads LASVRGYYFFGQTLCALE. C103 and C179 form a disulfide bridge. The helical transmembrane segment at 107–126 threads the bilayer; that stretch reads AAVGAVAGLVTSWSLAVLSF. Residues 127 to 145 lie on the Cytoplasmic side of the membrane; that stretch reads ERYLVICKPFGAFKFGSNH. A helical transmembrane segment spans residues 146-168; the sequence is ALAAVIFTWFMGVVRCPPFFGWS. The Extracellular segment spans residues 169–194; the sequence is RYIPEGLGCSCGPDWYTNCEEFSCAS. A helical membrane pass occupies residues 195 to 222; the sequence is YSKFLLVTCFICPITIIIFSYSQLLGAL. Residues 223-244 lie on the Cytoplasmic side of the membrane; sequence RAVAAQQAESASTQKAEKEVSR. Residues 245–272 traverse the membrane as a helical segment; the sequence is MIIVMVASFVTCYGPYALTAQYYAYSQD. Over 273–279 the chain is Extracellular; it reads ENKDYRL. A helical transmembrane segment spans residues 280–301; that stretch reads VTIPAFFSKSSCVYNPLIYAFM. K288 is modified (N6-(retinylidene)lysine). Residues 302–334 are Cytoplasmic-facing; the sequence is NKQFNGCIMEMVFGKKMEEASEVSSKTEVSTDS.

The protein belongs to the G-protein coupled receptor 1 family. Opsin subfamily. Phosphorylated on some or all of the serine and threonine residues present in the C-terminal region. As to expression, the three color pigments are found in the cone photoreceptor cells.

The protein resides in the membrane. Visual pigments are the light-absorbing molecules that mediate vision. They consist of an apoprotein, opsin, covalently linked to cis-retinal. The chain is Putative violet-sensitive opsin from Oryzias latipes (Japanese rice fish).